Reading from the N-terminus, the 122-residue chain is Large ribosomal subunit protein bL12 (122 aa).

This sequence belongs to the bacterial ribosomal protein bL12 family. Homodimer. Part of the ribosomal stalk of the 50S ribosomal subunit. Forms a multimeric L10(L12)X complex, where L10 forms an elongated spine to which 2 to 4 L12 dimers bind in a sequential fashion. Binds GTP-bound translation factors.

Functionally, forms part of the ribosomal stalk which helps the ribosome interact with GTP-bound translation factors. Is thus essential for accurate translation. This Staphylococcus aureus (strain Mu50 / ATCC 700699) protein is Large ribosomal subunit protein bL12.